The chain runs to 303 residues: Beta-lactamase L2 (303 aa).

The segment at residues 1–35 (MLARRRFLQFSGAAVASSLALPLLARAAGKTAASA) is a signal peptide (tat-type signal). The active-site Acyl-ester intermediate is S83. Residue 247–249 (KTG) participates in substrate binding.

This sequence belongs to the class-A beta-lactamase family. Predicted to be exported by the Tat system. The position of the signal peptide cleavage has not been experimentally proven.

It catalyses the reaction a beta-lactam + H2O = a substituted beta-amino acid. In Stenotrophomonas maltophilia (Pseudomonas maltophilia), this protein is Beta-lactamase L2.